A 280-amino-acid chain; its full sequence is Ribosomal protein L11 methyltransferase (280 aa).

4 residues coordinate S-adenosyl-L-methionine: T131, G152, D174, and N217.

The protein belongs to the methyltransferase superfamily. PrmA family.

It is found in the cytoplasm. It catalyses the reaction L-lysyl-[protein] + 3 S-adenosyl-L-methionine = N(6),N(6),N(6)-trimethyl-L-lysyl-[protein] + 3 S-adenosyl-L-homocysteine + 3 H(+). Its function is as follows. Methylates ribosomal protein L11. This is Ribosomal protein L11 methyltransferase from Bacteroides fragilis (strain ATCC 25285 / DSM 2151 / CCUG 4856 / JCM 11019 / LMG 10263 / NCTC 9343 / Onslow / VPI 2553 / EN-2).